A 421-amino-acid polypeptide reads, in one-letter code: UDP-N-acetylglucosamine 1-carboxyvinyltransferase (421 aa).

K22–N23 serves as a coordination point for phosphoenolpyruvate. R92 is a binding site for UDP-N-acetyl-alpha-D-glucosamine. The active-site Proton donor is C116. Position 116 is a 2-(S-cysteinyl)pyruvic acid O-phosphothioketal (C116). D307 and V329 together coordinate UDP-N-acetyl-alpha-D-glucosamine.

It belongs to the EPSP synthase family. MurA subfamily.

It localises to the cytoplasm. The catalysed reaction is phosphoenolpyruvate + UDP-N-acetyl-alpha-D-glucosamine = UDP-N-acetyl-3-O-(1-carboxyvinyl)-alpha-D-glucosamine + phosphate. It functions in the pathway cell wall biogenesis; peptidoglycan biosynthesis. Cell wall formation. Adds enolpyruvyl to UDP-N-acetylglucosamine. This is UDP-N-acetylglucosamine 1-carboxyvinyltransferase from Kosmotoga olearia (strain ATCC BAA-1733 / DSM 21960 / TBF 19.5.1).